We begin with the raw amino-acid sequence, 624 residues long: Threonine--tRNA ligase (624 aa).

Positions 1–143 (MRLLFIHADE…SRTVTPEAAE (143 aa)) are editing domain. A catalytic region spans residues 197 to 499 (AHVKLMREKE…EQEGKLPTLP (303 aa)). C289, H340, and H467 together coordinate Zn(2+). The tract at residues 598 to 624 (LERETEGKPRVPLTIPDRLSRRPRFGR) is disordered.

Belongs to the class-II aminoacyl-tRNA synthetase family. In terms of assembly, homodimer. Zn(2+) serves as cofactor.

Its subcellular location is the cytoplasm. The catalysed reaction is tRNA(Thr) + L-threonine + ATP = L-threonyl-tRNA(Thr) + AMP + diphosphate + H(+). Catalyzes the attachment of threonine to tRNA(Thr) in a two-step reaction: L-threonine is first activated by ATP to form Thr-AMP and then transferred to the acceptor end of tRNA(Thr). Also edits incorrectly charged L-seryl-tRNA(Thr). This Methanopyrus kandleri (strain AV19 / DSM 6324 / JCM 9639 / NBRC 100938) protein is Threonine--tRNA ligase.